Here is a 1048-residue protein sequence, read N- to C-terminus: Anguibactin system regulator (1048 aa).

In terms of domain architecture, Carrier spans Pro965 to Arg1039.

Belongs to the ATP-dependent AMP-binding enzyme family.

It functions in the pathway siderophore biosynthesis; anguibactin biosynthesis. Bifunctional protein that plays an essential role in virulence. Plays a role in both the production of the siderophore anguibactin and the regulation of iron transport genes. The protein is Anguibactin system regulator (angR) of Vibrio anguillarum (Listonella anguillarum).